The following is a 264-amino-acid chain: Undecaprenyl-diphosphatase 2 (264 aa).

The next 7 membrane-spanning stretches (helical) occupy residues 29-49, 77-97, 107-127, 137-157, 180-200, 212-232, and 243-263; these read GSAF…SYFW, SWIV…SGVL, LTVI…AEIF, ASLA…IPGV, FSFL…LWEL, VLAT…WGLM, and FVIY…MGWL.

Belongs to the UppP family.

It localises to the cell inner membrane. It carries out the reaction di-trans,octa-cis-undecaprenyl diphosphate + H2O = di-trans,octa-cis-undecaprenyl phosphate + phosphate + H(+). Its function is as follows. Catalyzes the dephosphorylation of undecaprenyl diphosphate (UPP). Confers resistance to bacitracin. The polypeptide is Undecaprenyl-diphosphatase 2 (Mesorhizobium japonicum (strain LMG 29417 / CECT 9101 / MAFF 303099) (Mesorhizobium loti (strain MAFF 303099))).